Here is a 301-residue protein sequence, read N- to C-terminus: Oxygen-dependent coproporphyrinogen-III oxidase (301 aa).

The segment at 49 to 58 (VMVDGAVIEK) is important for dimerization. S93 serves as a coordination point for substrate. The active-site Proton donor is the H107. Residues 109–111 (NVR) and 259–261 (GGR) each bind substrate. Residues 241–276 (YAEFNLVIDRGTKFGLQSGGRTESILISLPPRARWG) are important for dimerization.

It belongs to the aerobic coproporphyrinogen-III oxidase family. Homodimer.

It is found in the cytoplasm. The catalysed reaction is coproporphyrinogen III + O2 + 2 H(+) = protoporphyrinogen IX + 2 CO2 + 2 H2O. Its pathway is porphyrin-containing compound metabolism; protoporphyrin-IX biosynthesis; protoporphyrinogen-IX from coproporphyrinogen-III (O2 route): step 1/1. Functionally, involved in the heme biosynthesis. Catalyzes the aerobic oxidative decarboxylation of propionate groups of rings A and B of coproporphyrinogen-III to yield the vinyl groups in protoporphyrinogen-IX. This is Oxygen-dependent coproporphyrinogen-III oxidase from Leishmania major.